Consider the following 273-residue polypeptide: Large ribosomal subunit protein uL2 (273 aa).

A disordered region spans residues 223-273 (VVMNPVDHPMGGGEGRSSGGRHPCTPWGVPTKGHKTRSNKSTDKYIVKRRG). Residues 262-273 (KSTDKYIVKRRG) show a composition bias toward basic and acidic residues.

This sequence belongs to the universal ribosomal protein uL2 family. Part of the 50S ribosomal subunit. Forms a bridge to the 30S subunit in the 70S ribosome.

In terms of biological role, one of the primary rRNA binding proteins. Required for association of the 30S and 50S subunits to form the 70S ribosome, for tRNA binding and peptide bond formation. It has been suggested to have peptidyltransferase activity; this is somewhat controversial. Makes several contacts with the 16S rRNA in the 70S ribosome. In Syntrophus aciditrophicus (strain SB), this protein is Large ribosomal subunit protein uL2.